The sequence spans 147 residues: Acidic phospholipase A2 beta-bungarotoxin A3 chain (147 aa).

Residues 1–19 (MYPAHLLVLSAVCVSLLGA) form the signal peptide. The propeptide occupies 20–27 (ANIPPHPL). 6 disulfides stabilise this stretch: C54–C146, C56–C72, C71–C127, C78–C120, C88–C113, and C106–C118. Residues Y55, G57, and G59 each contribute to the Ca(2+) site. H75 is an active-site residue. D76 contacts Ca(2+). D121 is an active-site residue.

Belongs to the phospholipase A2 family. Group I subfamily. D49 sub-subfamily. As to quaternary structure, heterodimer; disulfide-linked. The A chains have phospholipase A2 activity and the B chains show homology with the basic protease inhibitors. The A3 chain is found in beta-5 bungarotoxins. It depends on Ca(2+) as a cofactor. As to expression, expressed by the venom gland.

The protein resides in the secreted. The catalysed reaction is a 1,2-diacyl-sn-glycero-3-phosphocholine + H2O = a 1-acyl-sn-glycero-3-phosphocholine + a fatty acid + H(+). In terms of biological role, snake venom phospholipase A2 (PLA2) that inhibits neuromuscular transmission by blocking acetylcholine release from the nerve termini. PLA2 catalyzes the calcium-dependent hydrolysis of the 2-acyl groups in 3-sn-phosphoglycerides. In Bungarus multicinctus (Many-banded krait), this protein is Acidic phospholipase A2 beta-bungarotoxin A3 chain.